The sequence spans 92 residues: Small ribosomal subunit protein uS19 (92 aa).

Belongs to the universal ribosomal protein uS19 family.

Functionally, protein S19 forms a complex with S13 that binds strongly to the 16S ribosomal RNA. The chain is Small ribosomal subunit protein uS19 from Thermosynechococcus vestitus (strain NIES-2133 / IAM M-273 / BP-1).